Reading from the N-terminus, the 142-residue chain is gSG7 salivary protein (142 aa).

An N-terminal signal peptide occupies residues 1–26 (MAARMTIMLPLAVALICLLQTEPGMA). 2 disulfides stabilise this stretch: C84/C139 and C107/C117.

The protein localises to the secreted. In terms of biological role, salivary protein that moderately inhibits the alternative pathway for complement system activation in the host. In Anopheles darlingi (Mosquito), this protein is gSG7 salivary protein.